We begin with the raw amino-acid sequence, 166 residues long: Interleukin-3 (166 aa).

The signal sequence occupies residues 1–27 (MVLASSTTSILCMLLPLLMLFHQGLQI). 2 disulfide bridges follow: Cys-43–Cys-106 and Cys-105–Cys-166. N-linked (GlcNAc...) asparagine glycosylation is found at Asn-60 and Asn-70. The segment at 145–166 (SVSRPPQPTSSSDNFRPMTVEC) is disordered.

Belongs to the IL-3 family. As to quaternary structure, monomer. Activated T-cells, mast cells, natural killer cells.

Its subcellular location is the secreted. Functionally, cytokine secreted predominantly by activated T-lymphocytes as well as mast cells and osteoblastic cells that controls the production and differentiation of hematopoietic progenitor cells into lineage-restricted cells. Also stimulates mature basophils, eosinophils, and monocytes to become functionally activated. In addition, plays an important role in neural cell proliferation and survival. Participates as well in bone homeostasis and inhibits osteoclast differentiation by preventing NF-kappa-B nuclear translocation and activation. Mechanistically, exerts its biological effects through a receptor composed of IL3RA subunit and a signal transducing subunit IL3RB. Receptor stimulation results in the rapid activation of JAK2 kinase activity leading to STAT5-mediated transcriptional program. Alternatively, contributes to cell survival under oxidative stress in non-hematopoietic systems by activating pathways mediated by PI3K/AKT and ERK. In Rattus norvegicus (Rat), this protein is Interleukin-3 (Il3).